We begin with the raw amino-acid sequence, 616 residues long: Dihydroxy-acid dehydratase (616 aa).

Mg(2+) is bound at residue Asp-81. Cys-122 serves as a coordination point for [2Fe-2S] cluster. Residues Asp-123 and Lys-124 each coordinate Mg(2+). Lys-124 carries the post-translational modification N6-carboxylysine. Cys-195 provides a ligand contact to [2Fe-2S] cluster. Position 491 (Glu-491) interacts with Mg(2+). The Proton acceptor role is filled by Ser-517.

Belongs to the IlvD/Edd family. In terms of assembly, homodimer. [2Fe-2S] cluster is required as a cofactor. Mg(2+) serves as cofactor.

The enzyme catalyses (2R)-2,3-dihydroxy-3-methylbutanoate = 3-methyl-2-oxobutanoate + H2O. The catalysed reaction is (2R,3R)-2,3-dihydroxy-3-methylpentanoate = (S)-3-methyl-2-oxopentanoate + H2O. The protein operates within amino-acid biosynthesis; L-isoleucine biosynthesis; L-isoleucine from 2-oxobutanoate: step 3/4. It participates in amino-acid biosynthesis; L-valine biosynthesis; L-valine from pyruvate: step 3/4. Functions in the biosynthesis of branched-chain amino acids. Catalyzes the dehydration of (2R,3R)-2,3-dihydroxy-3-methylpentanoate (2,3-dihydroxy-3-methylvalerate) into 2-oxo-3-methylpentanoate (2-oxo-3-methylvalerate) and of (2R)-2,3-dihydroxy-3-methylbutanoate (2,3-dihydroxyisovalerate) into 2-oxo-3-methylbutanoate (2-oxoisovalerate), the penultimate precursor to L-isoleucine and L-valine, respectively. The polypeptide is Dihydroxy-acid dehydratase (Escherichia coli O81 (strain ED1a)).